We begin with the raw amino-acid sequence, 683 residues long: Cytoskeleton-associated protein 2 (683 aa).

2 disordered regions span residues 1–28 and 153–175; these read MSTPAVPQDLQLPPSQRAQSAFKEQRRQ and NSKKKQMTTEKQKQDANMPKKPV. Residues S178 and S190 each carry the phosphoserine modification. Disordered regions lie at residues 214–236 and 336–403; these read KATKPQPVNTSSVTVKSNRSSNM and EKSE…EKPV. The segment covering 219-236 has biased composition (polar residues); the sequence is QPVNTSSVTVKSNRSSNM. 2 stretches are compositionally biased toward basic and acidic residues: residues 336-345 and 362-376; these read EKSEPVDQRR and ETSEERKARLSEWKA. S534 carries the phosphoserine modification. Residues T579 and T582 each carry the phosphothreonine modification. A Phosphoserine modification is found at S595. 2 positions are modified to phosphothreonine: T596 and T597. Y599 carries the post-translational modification Phosphotyrosine. S602 carries the post-translational modification Phosphoserine.

It belongs to the CKAP2 family. As to quaternary structure, associates with alpha- and beta-tubulins. Abundant in testis, thymus, and in tumor derived cell lines, while barely detectable in liver, prostate, and kidney.

The protein localises to the cytoplasm. The protein resides in the cytoskeleton. It localises to the spindle. It is found in the spindle pole. In terms of biological role, possesses microtubule stabilizing properties. Involved in regulating aneuploidy, cell cycling, and cell death in a p53/TP53-dependent manner. The polypeptide is Cytoskeleton-associated protein 2 (Homo sapiens (Human)).